The primary structure comprises 190 residues: MSIKEDKWIRKMALAHGMIEPFADGQVNVDAETGEKLISYGLSSYGYDLRLSREFKVFTNVYNSLVDPKHFTEDTFISITDDVCIIPPNSFALAHSVEYFRIPRNILTMCIGKSTYARCGLIVNVTPFEPEWEGYVTIEISNTTPLPAKIYANEGIAQVLFFEADEMCEVSYAERKGKYQKQQGITVPFV.

113-118 (KSTYAR) is a binding site for dCTP. Glu139 serves as the catalytic Proton donor/acceptor. The dCTP site is built by Gln158, Tyr172, Lys181, and Gln182.

This sequence belongs to the dCTP deaminase family. As to quaternary structure, homotrimer.

The catalysed reaction is dCTP + H2O + H(+) = dUTP + NH4(+). The protein operates within pyrimidine metabolism; dUMP biosynthesis; dUMP from dCTP (dUTP route): step 1/2. In terms of biological role, catalyzes the deamination of dCTP to dUTP. The sequence is that of dCTP deaminase from Chlamydia caviae (strain ATCC VR-813 / DSM 19441 / 03DC25 / GPIC) (Chlamydophila caviae).